We begin with the raw amino-acid sequence, 303 residues long: Signal recognition particle receptor FtsY (303 aa).

GTP-binding positions include 108 to 115, 190 to 194, and 254 to 257; these read GVNGVGKT, DTAGR, and TKLD.

The protein belongs to the GTP-binding SRP family. FtsY subfamily. Part of the signal recognition particle protein translocation system, which is composed of SRP and FtsY. SRP is a ribonucleoprotein composed of Ffh and a 4.5S RNA molecule.

It localises to the cell inner membrane. Its subcellular location is the cytoplasm. The enzyme catalyses GTP + H2O = GDP + phosphate + H(+). Its function is as follows. Involved in targeting and insertion of nascent membrane proteins into the cytoplasmic membrane. Acts as a receptor for the complex formed by the signal recognition particle (SRP) and the ribosome-nascent chain (RNC). Interaction with SRP-RNC leads to the transfer of the RNC complex to the Sec translocase for insertion into the membrane, the hydrolysis of GTP by both Ffh and FtsY, and the dissociation of the SRP-FtsY complex into the individual components. This Rickettsia typhi (strain ATCC VR-144 / Wilmington) protein is Signal recognition particle receptor FtsY.